A 334-amino-acid polypeptide reads, in one-letter code: Galactosylgalactosylxylosylprotein 3-beta-glucuronosyltransferase 1 (334 aa).

Residues 1–6 are Cytoplasmic-facing; it reads MPKRRD. The tract at residues 3–5 is essential for transport from endoplasmic reticulum to Golgi apparatus and interaction with SAR1A; sequence KRR. A helical; Signal-anchor for type II membrane protein membrane pass occupies residues 7 to 27; that stretch reads ILAIVLIVLPWTLLITVWHQS. The Lumenal segment spans residues 28 to 334; sequence TLAPLLAVHK…KGFTDPSVEI (307 aa). A disordered region spans residues 37 to 56; that stretch reads KDEGSDPRRETPPGADPREY. 91-93 contributes to the UDP-alpha-D-glucuronate binding site; it reads PTY. Phosphothreonine is present on residues T103 and T108. UDP-alpha-D-glucuronate is bound at residue D122. The N-linked (GlcNAc...) asparagine glycan is linked to N140. R165 and R170 together coordinate UDP-alpha-D-glucuronate. N184 carries an N-linked (GlcNAc...) asparagine glycan. Residue 195 to 197 participates in UDP-alpha-D-glucuronate binding; sequence DDD. D197 is a binding site for Mn(2+). The interaction with galactose moiety of substrate glycoprotein stretch occupies residues 245-254; it reads FDPHRPFAID. E284 acts as the Proton donor/acceptor in catalysis. N-linked (GlcNAc...) asparagine glycosylation occurs at N303. Residue 311–313 coordinates UDP-alpha-D-glucuronate; that stretch reads HTR.

This sequence belongs to the glycosyltransferase 43 family. In terms of assembly, homodimer. Interacts with SAR1A. It depends on Mn(2+) as a cofactor. The soluble form derives from the membrane form by proteolytic processing. As to expression, mainly expressed in the brain.

The protein resides in the golgi apparatus membrane. It localises to the secreted. Its subcellular location is the endoplasmic reticulum membrane. It carries out the reaction 3-O-(beta-D-galactosyl-(1-&gt;3)-beta-D-galactosyl-(1-&gt;4)-beta-D-xylosyl)-L-seryl-[protein] + UDP-alpha-D-glucuronate = 3-O-(beta-D-GlcA-(1-&gt;3)-beta-D-Gal-(1-&gt;3)-beta-D-Gal-(1-&gt;4)-beta-D-Xyl)-L-seryl-[protein] + UDP + H(+). The protein operates within protein modification; protein glycosylation. Involved in the biosynthesis of L2/HNK-1 carbohydrate epitope on glycoproteins. Can also play a role in glycosaminoglycan biosynthesis. Substrates include asialo-orosomucoid (ASOR), asialo-fetuin, and asialo-neural cell adhesion molecule. Requires sphingomyelin for activity: stearoyl-sphingomyelin was the most effective, followed by palmitoyl-sphingomyelin and lignoceroyl-sphingomyelin. Activity was demonstrated only for sphingomyelin with a saturated fatty acid and not for that with an unsaturated fatty acid, regardless of the length of the acyl group. This is Galactosylgalactosylxylosylprotein 3-beta-glucuronosyltransferase 1 from Homo sapiens (Human).